A 965-amino-acid polypeptide reads, in one-letter code: Valine--tRNA ligase (965 aa).

The segment at 1-22 is disordered; it reads MENTPSHINKTEPSLDKTYSPQ. The 'HIGH' region motif lies at 56-66; the sequence is PNVTGSLHMGH. Residues 568–572 carry the 'KMSKS' region motif; sequence KMSKS. Position 571 (Lys-571) interacts with ATP. A coiled-coil region spans residues 896–965; sequence LIDKATELDR…IEQQATIAAL (70 aa).

It belongs to the class-I aminoacyl-tRNA synthetase family. ValS type 1 subfamily. As to quaternary structure, monomer.

The protein resides in the cytoplasm. It carries out the reaction tRNA(Val) + L-valine + ATP = L-valyl-tRNA(Val) + AMP + diphosphate. Functionally, catalyzes the attachment of valine to tRNA(Val). As ValRS can inadvertently accommodate and process structurally similar amino acids such as threonine, to avoid such errors, it has a 'posttransfer' editing activity that hydrolyzes mischarged Thr-tRNA(Val) in a tRNA-dependent manner. In Yersinia pestis, this protein is Valine--tRNA ligase.